The sequence spans 357 residues: Probable butyrate kinase (357 aa).

It belongs to the acetokinase family.

The protein localises to the cytoplasm. It catalyses the reaction butanoate + ATP = butanoyl phosphate + ADP. This Thermotoga petrophila (strain ATCC BAA-488 / DSM 13995 / JCM 10881 / RKU-1) protein is Probable butyrate kinase.